The following is a 31-amino-acid chain: L-amino-acid oxidase (31 aa).

It belongs to the flavin monoamine oxidase family. FIG1 subfamily. Homodimer; non-covalently linked. The cofactor is FAD. N-glycosylated. As to expression, expressed by the venom gland.

It is found in the secreted. It catalyses the reaction an L-alpha-amino acid + O2 + H2O = a 2-oxocarboxylate + H2O2 + NH4(+). It carries out the reaction L-leucine + O2 + H2O = 4-methyl-2-oxopentanoate + H2O2 + NH4(+). The catalysed reaction is L-phenylalanine + O2 + H2O = 3-phenylpyruvate + H2O2 + NH4(+). The enzyme catalyses L-histidine + O2 + H2O = 3-(imidazol-5-yl)pyruvate + H2O2 + NH4(+). In terms of biological role, catalyzes an oxidative deamination of predominantly hydrophobic and aromatic L-amino acids, thus producing hydrogen peroxide that may contribute to the diverse toxic effects of this enzyme. Is moderately active on L-Leu, L-His, and L-Phe, and very weakly active on L-Thr, and L-Cys. Exhibits diverse biological activities, such as hemorrhage, hemolysis, edema, antibacterial and antiparasitic activities, as well as regulation of platelet aggregation. Its effect on platelets is controversial, since it either induces aggregation or inhibits agonist-induced aggregation. These different effects are probably due to different experimental conditions. Inhibits growth of B.subtilis strain ATCC 6633 (MIC=32 uM), E.faecalis strain ATCC 12953 (MIC=32 uM), S.aureus strain ATCC 29213 (MIC=32 uM), S.pyogenes strain ATCC 19615 (MIC=8 uM), E.coli strain ATCC 8739 (MIC=4 uM), K.pneumoniae strain ATCC 13885 (MIC=2 uM), P.mirabilis strain ATCC 25933 (MIC=2 uM), P.aeruginosa strain ATCC 15442 (MIC=8 uM) and S.typhimurium strain ATCC 14028 (MIC=8 uM). This Bothrops mattogrossensis (Pitviper) protein is L-amino-acid oxidase.